Consider the following 415-residue polypeptide: Tyrosine--tRNA ligase (415 aa).

Tyr-34 is a binding site for L-tyrosine. Residues 39-48 (PTADSLHLGH) carry the 'HIGH' region motif. L-tyrosine-binding residues include Tyr-164 and Gln-168. The 'KMSKS' region signature appears at 226 to 230 (KFGKS). Residue Lys-229 participates in ATP binding. An S4 RNA-binding domain is found at 348–415 (KNVVDFLVDG…KKKYFLGKVK (68 aa)).

This sequence belongs to the class-I aminoacyl-tRNA synthetase family. TyrS type 1 subfamily. As to quaternary structure, homodimer.

The protein resides in the cytoplasm. The catalysed reaction is tRNA(Tyr) + L-tyrosine + ATP = L-tyrosyl-tRNA(Tyr) + AMP + diphosphate + H(+). Its function is as follows. Catalyzes the attachment of tyrosine to tRNA(Tyr) in a two-step reaction: tyrosine is first activated by ATP to form Tyr-AMP and then transferred to the acceptor end of tRNA(Tyr). This Leuconostoc mesenteroides subsp. mesenteroides (strain ATCC 8293 / DSM 20343 / BCRC 11652 / CCM 1803 / JCM 6124 / NCDO 523 / NBRC 100496 / NCIMB 8023 / NCTC 12954 / NRRL B-1118 / 37Y) protein is Tyrosine--tRNA ligase.